We begin with the raw amino-acid sequence, 423 residues long: Glutamyl-tRNA reductase (423 aa).

Substrate-binding positions include 49 to 52, S107, 112 to 114, and Q118; these read TCNR and EPQ. C50 functions as the Nucleophile in the catalytic mechanism. 187–192 is an NADP(+) binding site; the sequence is GAGETI.

The protein belongs to the glutamyl-tRNA reductase family. In terms of assembly, homodimer.

The catalysed reaction is (S)-4-amino-5-oxopentanoate + tRNA(Glu) + NADP(+) = L-glutamyl-tRNA(Glu) + NADPH + H(+). Its pathway is porphyrin-containing compound metabolism; protoporphyrin-IX biosynthesis; 5-aminolevulinate from L-glutamyl-tRNA(Glu): step 1/2. Its function is as follows. Catalyzes the NADPH-dependent reduction of glutamyl-tRNA(Glu) to glutamate 1-semialdehyde (GSA). In Pseudoalteromonas atlantica (strain T6c / ATCC BAA-1087), this protein is Glutamyl-tRNA reductase.